The sequence spans 228 residues: Nuclear phosphoprotein UL3 homolog (228 aa).

This sequence belongs to the alphaherpesvirinae HHV-1 UL3 family. Post-translationally, phosphorylated.

The protein resides in the host nucleus. This Gallus gallus (Chicken) protein is Nuclear phosphoprotein UL3 homolog (MDV015).